The primary structure comprises 102 residues: Putative sortase YwpE (102 aa).

Catalysis depends on His-17, which acts as the Proton donor/acceptor. Cys-78 serves as the catalytic Acyl-thioester intermediate.

Belongs to the bacterial sortase family.

Its function is as follows. Seems not to play a major role if any as a sortase. This is Putative sortase YwpE (ywpE) from Bacillus subtilis (strain 168).